The primary structure comprises 114 residues: Putative membrane protein insertion efficiency factor (114 aa).

The protein belongs to the UPF0161 family.

The protein resides in the cell inner membrane. Could be involved in insertion of integral membrane proteins into the membrane. The chain is Putative membrane protein insertion efficiency factor from Wolinella succinogenes (strain ATCC 29543 / DSM 1740 / CCUG 13145 / JCM 31913 / LMG 7466 / NCTC 11488 / FDC 602W) (Vibrio succinogenes).